The following is an 869-amino-acid chain: Probable inorganic carbon transporter subunit DabA (869 aa).

Residues 1 to 32 (MSTATLEQRAKRGEAPRANDAGHCAHPADGAR) are disordered. Basic and acidic residues predominate over residues 8–17 (QRAKRGEAPR). Residues Cys376, Asp378, His555, and Cys570 each contribute to the Zn(2+) site.

This sequence belongs to the inorganic carbon transporter (TC 9.A.2) DabA family. Forms a complex with DabB. Zn(2+) serves as cofactor.

The protein localises to the cell inner membrane. Functionally, part of an energy-coupled inorganic carbon pump. This Burkholderia multivorans (strain ATCC 17616 / 249) protein is Probable inorganic carbon transporter subunit DabA.